The following is a 318-amino-acid chain: Glutathione synthetase (318 aa).

The ATP-grasp domain occupies 129-314 (KLAITEFPDL…VPEMFAVALE (186 aa)). 155–211 (HAAQGDVIVKPLDGMGGTGIFRLQRSEPNLNAILETLTDNGTRTIMAQRYIPEIVKG) serves as a coordination point for ATP. The Mg(2+) site is built by glutamate 285 and asparagine 287.

It belongs to the prokaryotic GSH synthase family. The cofactor is Mg(2+). Mn(2+) serves as cofactor.

It carries out the reaction gamma-L-glutamyl-L-cysteine + glycine + ATP = glutathione + ADP + phosphate + H(+). It functions in the pathway sulfur metabolism; glutathione biosynthesis; glutathione from L-cysteine and L-glutamate: step 2/2. The protein is Glutathione synthetase of Bordetella bronchiseptica (strain ATCC BAA-588 / NCTC 13252 / RB50) (Alcaligenes bronchisepticus).